Reading from the N-terminus, the 209-residue chain is Auxin-binding protein ABP19b (209 aa).

The signal sequence occupies residues 1–18 (MIFPIFFTFFLLLSTSHA). Cysteine 24 and cysteine 39 are disulfide-bonded. The region spanning 53-199 (SGLGIAGNTT…TTLLDAPQIK (147 aa)) is the Cupin type-1 domain. An N-linked (GlcNAc...) asparagine glycan is attached at asparagine 60. Positions 101, 103, 108, and 147 each coordinate Mn(2+).

It belongs to the germin family. Interacts with ABP20.

Its subcellular location is the secreted. The protein resides in the extracellular space. It localises to the apoplast. The protein localises to the cell wall. In terms of biological role, probable receptor for the plant growth-promoting hormone auxin. This Prunus persica (Peach) protein is Auxin-binding protein ABP19b (ABP19B).